The sequence spans 153 residues: Regulatory protein RecX (153 aa).

Belongs to the RecX family.

It is found in the cytoplasm. Its function is as follows. Modulates RecA activity. This is Regulatory protein RecX from Neisseria gonorrhoeae (strain ATCC 700825 / FA 1090).